Consider the following 509-residue polypeptide: uncharacterized protein (509 aa).

Residues 108-225 enclose the G domain; that stretch reads GKSSLCNLLA…KRHKPLFPVI (118 aa).

This is an uncharacterized protein from Acinetobacter baylyi (strain ATCC 33305 / BD413 / ADP1).